The chain runs to 96 residues: Protein RnfH (96 aa).

Belongs to the UPF0125 (RnfH) family.

The polypeptide is Protein RnfH (Escherichia fergusonii (strain ATCC 35469 / DSM 13698 / CCUG 18766 / IAM 14443 / JCM 21226 / LMG 7866 / NBRC 102419 / NCTC 12128 / CDC 0568-73)).